The following is an 89-amino-acid chain: Large ribosomal subunit protein bL27 (89 aa).

A disordered region spans residues 1-21 (MAHKKGASSSRNGRDSNAQRL). Polar residues predominate over residues 7–19 (ASSSRNGRDSNAQ).

It belongs to the bacterial ribosomal protein bL27 family.

The sequence is that of Large ribosomal subunit protein bL27 from Frankia alni (strain DSM 45986 / CECT 9034 / ACN14a).